Consider the following 502-residue polypeptide: Cytochrome P450 71B17 (502 aa).

Residues 1-21 traverse the membrane as a helical segment; that stretch reads MAISLLCLFLITFVSLTIVGC. C444 contributes to the heme binding site.

This sequence belongs to the cytochrome P450 family. It depends on heme as a cofactor.

The protein resides in the membrane. In Arabidopsis thaliana (Mouse-ear cress), this protein is Cytochrome P450 71B17 (CYP71B17).